A 385-amino-acid chain; its full sequence is MSTTTTMRAWTYMQSGLPSQTIVLDDEAPSPSAAELGPDELLIAVNYVAMNSGFTTLMRSLPPQPYSLPHIYNRQKRLGVPEFEFSGRILAVGSAIPSTRPDLQPSTLVLGCCAAKRVFIEGKGALAERVIAPAAQLIPLRPLSTVTTQDDESPGPDPAAPPISLLEASGLSACGCTAVQVLDLTKLVAGDKLFVNGGSTSVGMLIIQVARQVLGQTGTIIASGTDATLIRSVGADDVIDYTAQRPLHEFLRTHHAGRPFDAIIDCVGVAELYTHCEPYLAPGKLFINLGAMTAKPTFWGLLSFVWNQHMAPLWPVVLGGVPRSYQFYSARPNRETLGRVMRLVERGELRMVVDSVWEMRDAKMAYKRMESKRAKGKIIVRVQEE.

NADP(+) is bound at residue 64–67; sequence QPYS. 156–163 serves as a coordination point for substrate; the sequence is PDPAAPPI. Residues 199–202, 223–226, Tyr241, and 289–290 contribute to the NADP(+) site; these read STSV, SGTD, and LG. 309 to 313 lines the substrate pocket; sequence HMAPL. Residue 372 to 373 coordinates NADP(+); the sequence is KR.

Belongs to the zinc-containing alcohol dehydrogenase family. In terms of assembly, monomer.

The protein operates within secondary metabolite biosynthesis. Functionally, trans-enoyl reductase; part of the gene cluster that mediates the biosynthesis of oxaleimides, cytotoxic compounds containing an unusual disubstituted succinimide moiety. The first step of the pathway is provided by the HR-PKS poxF that serves in a new mode of collaborative biosynthesis with the PKS-NRPS poxE, by providing the olefin containing amino acid substrate via the synthesis of an ACP-bound dec-4-enoate. The cytochrome P450 monooxygenase poxM-catalyzed oxidation at the alpha-position creates the enzyme-bound 2-hydroxydec-4-enoyl-ACP thioester, which may be prone to spontaneous hydrolysis to yield 2-hydroxydec-4-enoic acid due to increased electrophilicity of the carbonyl. 2-hydroxydec-4-enoic acid can then be further oxidized by poxM to yield the alpha-ketoacid 2-oxodec-4-enoicacid, which is reductively aminated by the aminotransferase poxL to yield (S,E)-2-aminodec-4-enoic acid. The Hybrid PKS-NRPS synthetase poxE then performs condensation between the octaketide product of its PKS modules and the amino group of (S,E)-2-aminodec-4-enoic acid which is activated and incorporated by the adenylation domain. The resulting aminoacyl product can be cyclized by the Diels-Alderase PoxQ and reductively released by the reductive (R) domain of poxE to yield an aldehyde intermediate. The released aldehyde is then substrate for a Knoevenagel condensation by the hydrolyase poxO followed by an oxidation at the 5-position of the pyrrolidone ring. The presence of the olefin from the amino acid building block allows for migration of the substituted allyl group to occur. This allylic transposition reaction takes place in a conjugate addition, semipinacol-like fashion to yield a succinimide intermediate. Iterative two-electron oxidations of the C7 methyl of the succinimide intermediate to the carboxylic acid can be catalyzed by one of two remaining cytochrome P450 monooxygenasess poxC or poxD to yield oxaleimide A. Subsequent oxidation yields the maleimide scaffold oxaleimide I. Both oxaleimide A and oxaleimide I can undergo oxidative modifications in the decalin ring to yield the series of products oxaleimides B to H. The sequence is that of Trans-enoyl reductase poxH from Penicillium oxalicum (strain 114-2 / CGMCC 5302) (Penicillium decumbens).